Here is a 166-residue protein sequence, read N- to C-terminus: Small ribosomal subunit protein uS5 (166 aa).

The 64-residue stretch at 11 to 74 (LEDRVVAINR…DAARKNLIEV (64 aa)) folds into the S5 DRBM domain.

This sequence belongs to the universal ribosomal protein uS5 family. As to quaternary structure, part of the 30S ribosomal subunit. Contacts proteins S4 and S8.

Functionally, with S4 and S12 plays an important role in translational accuracy. Its function is as follows. Located at the back of the 30S subunit body where it stabilizes the conformation of the head with respect to the body. This Ligilactobacillus salivarius (strain UCC118) (Lactobacillus salivarius) protein is Small ribosomal subunit protein uS5.